The chain runs to 331 residues: MIEISNLFFNYQNKEVLKIKNLKLDTSKISILMGANGSGKSTFLRILKFLEGDFSKNISYFGNFKPNNKQKREIYLLFPEPILLNRSVRANFLFTLKTYGIKEDIEERIKESLMFLNLDESLLSKHPNELSSGQSQKIAFAIALSVRAKYYLLDEPSAFLDKNTTLLFKKTILKMHENFNTGFLIASHDKHFLDSLAQKKLYLHSGEILEFENTNVFELENQGVKFCNFIDFSNCKKYKDFKKPPSKIAIDPYKISFFNSKNIPKNNYDFILEKCYIIALRSRKSDVFIRVSCMDKILEFALEKQEFLRFDLKLYEELSLYFYEDAICFLN.

Positions 2 to 230 constitute an ABC transporter domain; that stretch reads IEISNLFFNY…NQGVKFCNFI (229 aa). 34-41 is an ATP binding site; that stretch reads GANGSGKS.

Belongs to the ABC transporter superfamily. In terms of assembly, the complex is composed of two ATP-binding proteins (TupC), two transmembrane proteins (TupB) and a solute-binding protein (TupA).

The catalysed reaction is tungstate(in) + ATP + H2O = tungstate(out) + ADP + phosphate + H(+). In terms of biological role, part of an ABC transporter complex involved in ultra-high affinity tungstate uptake. Probably responsible for energy coupling to the transport system. The chain is Tungstate uptake system ATP-binding protein TupC from Campylobacter jejuni subsp. jejuni serotype O:2 (strain ATCC 700819 / NCTC 11168).